A 253-amino-acid chain; its full sequence is GTP cyclohydrolase III (253 aa).

The protein belongs to the archaeal-type GTP cyclohydrolase family.

It carries out the reaction GTP + 3 H2O = 2-amino-5-formylamino-6-(5-phospho-D-ribosylamino)pyrimidin-4(3H)-one + 2 phosphate + 2 H(+). Catalyzes the formation of 2-amino-5-formylamino-6-ribofuranosylamino-4(3H)-pyrimidinone ribonucleotide monophosphate and inorganic phosphate from GTP. Also has an independent pyrophosphate phosphohydrolase activity. This chain is GTP cyclohydrolase III, found in Natronomonas pharaonis (strain ATCC 35678 / DSM 2160 / CIP 103997 / JCM 8858 / NBRC 14720 / NCIMB 2260 / Gabara) (Halobacterium pharaonis).